Consider the following 389-residue polypeptide: Phosphoglycerate kinase (389 aa).

Residues 21-23, Arg36, 59-62, Arg112, and Arg145 contribute to the substrate site; these read DLN and HLGR. ATP contacts are provided by residues Lys196, Glu313, and 342-345; that span reads GGDT.

Belongs to the phosphoglycerate kinase family. As to quaternary structure, monomer.

It is found in the cytoplasm. The catalysed reaction is (2R)-3-phosphoglycerate + ATP = (2R)-3-phospho-glyceroyl phosphate + ADP. The protein operates within carbohydrate degradation; glycolysis; pyruvate from D-glyceraldehyde 3-phosphate: step 2/5. This chain is Phosphoglycerate kinase, found in Mannheimia succiniciproducens (strain KCTC 0769BP / MBEL55E).